Reading from the N-terminus, the 153-residue chain is Glucose-6-phosphate 1-dehydrogenase (153 aa).

2 residues coordinate NADP(+): R21 and K120. K120 contacts D-glucose 6-phosphate.

It belongs to the glucose-6-phosphate dehydrogenase family.

It is found in the cytoplasm. The protein localises to the cytosol. The catalysed reaction is D-glucose 6-phosphate + NADP(+) = 6-phospho-D-glucono-1,5-lactone + NADPH + H(+). The protein operates within carbohydrate degradation; pentose phosphate pathway; D-ribulose 5-phosphate from D-glucose 6-phosphate (oxidative stage): step 1/3. Cytosolic glucose-6-phosphate dehydrogenase that catalyzes the first and rate-limiting step of the oxidative branch within the pentose phosphate pathway/shunt, an alternative route to glycolysis for the dissimilation of carbohydrates and a major source of reducing power and metabolic intermediates for fatty acid and nucleic acid biosynthetic processes. The polypeptide is Glucose-6-phosphate 1-dehydrogenase (Zw) (Drosophila simulans (Fruit fly)).